Consider the following 310-residue polypeptide: Phosphoribosylaminoimidazole-succinocarboxamide synthase (310 aa).

It belongs to the SAICAR synthetase family.

The enzyme catalyses 5-amino-1-(5-phospho-D-ribosyl)imidazole-4-carboxylate + L-aspartate + ATP = (2S)-2-[5-amino-1-(5-phospho-beta-D-ribosyl)imidazole-4-carboxamido]succinate + ADP + phosphate + 2 H(+). It participates in purine metabolism; IMP biosynthesis via de novo pathway; 5-amino-1-(5-phospho-D-ribosyl)imidazole-4-carboxamide from 5-amino-1-(5-phospho-D-ribosyl)imidazole-4-carboxylate: step 1/2. The protein is Phosphoribosylaminoimidazole-succinocarboxamide synthase of Xanthomonas axonopodis pv. citri (strain 306).